The sequence spans 393 residues: Ethanol acetyltransferase 1 (393 aa).

A mitochondrion-targeting transit peptide spans 1-25; it reads MHFTRTLFNQVASKASRQLPVQKRV. The region spanning 49–151 is the AB hydrolase-1 domain; that stretch reads PIVFVHGIFG…GVIIDNSPIE (103 aa). Active-site charge relay system residues include Ser122, Asp146, and His296. Over residues 343 to 354 the composition is skewed to basic and acidic residues; the sequence is AKHAQQIEELRK. Residues 343-393 are disordered; sequence AKHAQQIEELRKVTSTSESSIPHSTQSSEQAFTENIDLARQEREHQKSVSA. A compositionally biased stretch (polar residues) spans 355-375; sequence VTSTSESSIPHSTQSSEQAFT. A compositionally biased stretch (basic and acidic residues) spans 379-393; sequence DLARQEREHQKSVSA.

The protein belongs to the AB hydrolase superfamily.

The protein resides in the mitochondrion. It carries out the reaction ethanol + acetyl-CoA = ethyl acetate + CoA. The enzyme catalyses acetyl-CoA + H2O = acetate + CoA + H(+). The catalysed reaction is ethyl acetate + H2O = ethanol + acetate + H(+). Alcohol acetyltransferase that catalyzes the synthesis of ethyl acetate from ethanol and acetyl-CoA. Can also function as a thioesterase by hydrolyzing acetyl-CoA in the absence of ethanol, as well as esterase hydrolyzing ethyl acetate. The chain is Ethanol acetyltransferase 1 (EAT1) from Wickerhamomyces ciferrii (strain ATCC 14091 / BCRC 22168 / CBS 111 / JCM 3599 / NBRC 0793 / NRRL Y-1031 F-60-10) (Yeast).